Reading from the N-terminus, the 259-residue chain is Protein SODIUM POTASSIUM ROOT DEFECTIVE 2 (259 aa).

The interval 141 to 165 is disordered; the sequence is PDSITGSVDQDPAKTVEAEAPAGED. Basic and acidic residues predominate over residues 151–165; the sequence is DPAKTVEAEAPAGED. Residues 180 to 246 form the HMA domain; the sequence is QQVVVLKVSL…KVKNAQFWTN (67 aa). A metal cation contacts are provided by Cys-191 and Cys-194.

The chain is Protein SODIUM POTASSIUM ROOT DEFECTIVE 2 from Arabidopsis thaliana (Mouse-ear cress).